Consider the following 684-residue polypeptide: Kelch repeat and BTB domain-containing protein 7 (684 aa).

The disordered stretch occupies residues 1 to 27 (MQSREDVPRSRRLASPRGGRRPKRISK). The segment covering 10–26 (SRRLASPRGGRRPKRIS) has biased composition (basic residues). A Phosphoserine modification is found at Ser29. One can recognise a BTB domain in the interval 63–138 (CDVTIEVVTP…CYTGRVSLSE (76 aa)). Kelch repeat units follow at residues 386 to 435 (AVCV…YLNG), 436 to 484 (YIYI…VVQN), 486 to 523 (LYAVNSKRMLCYDPSHNMWLNCASLKRSDFQEACVFND), 524 to 564 (EIYC…IVNH), and 567 to 616 (KLLL…CLCA). The interval 630 to 666 (ITEEDDARSESSTEWDLDGFSELDSESGSSSSFSDDE) is disordered. A compositionally biased stretch (acidic residues) spans 631 to 654 (TEEDDARSESSTEWDLDGFSELDS). An ATG8 interaction motif (AIM) motif is present at residues 668 to 671 (WVQV).

Core component of a BCR3 (BTB-CUL3-RBX1) E3 ubiquitin ligase complex, also named Cul3-RING ubiquitin ligase complex CUL3(KBTBD6/7), composed of CUL3, RBX1, KBTBD6 and KBTBD7. Interacts with GABARAP; the interaction is direct and is required for the ubiquitination of TIAM1. Interacts with GABARAPL1, GABARAPL2 and MAP1LC3B; the interaction is direct.

It localises to the cytoplasm. The protein resides in the nucleus. It functions in the pathway protein modification; protein ubiquitination. In terms of biological role, as part of the CUL3(KBTBD6/7) E3 ubiquitin ligase complex functions as a substrate adapter for the RAC1 guanine exchange factor (GEF) TIAM1, mediating its 'Lys-48' ubiquitination and proteasomal degradation. By controlling this ubiquitination, regulates RAC1 signal transduction and downstream biological processes including the organization of the cytoskeleton, cell migration and cell proliferation. Ubiquitination of TIAM1 requires the membrane-associated protein GABARAP which may restrict locally the activity of the complex. The sequence is that of Kelch repeat and BTB domain-containing protein 7 from Homo sapiens (Human).